Reading from the N-terminus, the 207-residue chain is Probable HTH-type transcriptional regulator YttP (207 aa).

The HTH tetR-type domain occupies 3–63; that stretch reads VSTKDKIIES…HLVSEFYEGY (61 aa). The H-T-H motif DNA-binding region spans 26-45; the sequence is SVREIAKSADVNVAHISYYF.

The protein is Probable HTH-type transcriptional regulator YttP (yttP) of Bacillus subtilis (strain 168).